The following is a 451-amino-acid chain: AAA-ATPase At3g28570, mitochondrial (451 aa).

Residues 1-48 (MFAENLTRIGSNVAGLFFVWSTLKRYFPRQIQQLLFNAIQRIPIFKRL) constitute a mitochondrion transit peptide. 243 to 250 (GPPGTGKS) serves as a coordination point for ATP.

The protein belongs to the AAA ATPase family. BCS1 subfamily. The cofactor is Mg(2+).

The protein localises to the mitochondrion. The catalysed reaction is ATP + H2O = ADP + phosphate + H(+). The polypeptide is AAA-ATPase At3g28570, mitochondrial (Arabidopsis thaliana (Mouse-ear cress)).